The sequence spans 131 residues: Small ribosomal subunit protein bS6 (131 aa).

The segment at 98–131 (EASPMVKAKDERRERRDDFANETADDSDAGDSEE) is disordered. Positions 104-116 (KAKDERRERRDDF) are enriched in basic and acidic residues. Over residues 120–131 (TADDSDAGDSEE) the composition is skewed to acidic residues.

This sequence belongs to the bacterial ribosomal protein bS6 family.

Functionally, binds together with bS18 to 16S ribosomal RNA. The polypeptide is Small ribosomal subunit protein bS6 (Enterobacter sp. (strain 638)).